A 472-amino-acid chain; its full sequence is 6-phosphogluconate dehydrogenase, decarboxylating (472 aa).

Residues 10–15, 33–35, 74–76, and asparagine 102 each bind NADP(+); these read GMAVMG, NRT, and VQA. Residues asparagine 102 and 128–130 each bind substrate; that span reads SGG. Lysine 184 serves as the catalytic Proton acceptor. 187–188 is a substrate binding site; the sequence is HN. The active-site Proton donor is the glutamate 191. The substrate site is built by tyrosine 192, lysine 262, arginine 289, arginine 447, and histidine 453.

Belongs to the 6-phosphogluconate dehydrogenase family. In terms of assembly, homodimer.

The enzyme catalyses 6-phospho-D-gluconate + NADP(+) = D-ribulose 5-phosphate + CO2 + NADPH. It functions in the pathway carbohydrate degradation; pentose phosphate pathway; D-ribulose 5-phosphate from D-glucose 6-phosphate (oxidative stage): step 3/3. Its function is as follows. Catalyzes the oxidative decarboxylation of 6-phosphogluconate to ribulose 5-phosphate and CO(2), with concomitant reduction of NADP to NADPH. The protein is 6-phosphogluconate dehydrogenase, decarboxylating (gnd) of Lactococcus lactis subsp. lactis (strain IL1403) (Streptococcus lactis).